The primary structure comprises 136 residues: DNA-directed RNA polymerase subunit omega (136 aa).

Residues 79-107 (EPEAETVPLLSSSPAAAAVAPQSSSDDAA) are disordered. The segment covering 89 to 107 (SSSPAAAAVAPQSSSDDAA) has biased composition (low complexity).

The protein belongs to the RNA polymerase subunit omega family. In terms of assembly, the RNAP catalytic core consists of 2 alpha, 1 beta, 1 beta' and 1 omega subunit. When a sigma factor is associated with the core the holoenzyme is formed, which can initiate transcription.

It catalyses the reaction RNA(n) + a ribonucleoside 5'-triphosphate = RNA(n+1) + diphosphate. Promotes RNA polymerase assembly. Latches the N- and C-terminal regions of the beta' subunit thereby facilitating its interaction with the beta and alpha subunits. In Methylobacterium radiotolerans (strain ATCC 27329 / DSM 1819 / JCM 2831 / NBRC 15690 / NCIMB 10815 / 0-1), this protein is DNA-directed RNA polymerase subunit omega.